The following is a 284-amino-acid chain: Undecaprenyl-diphosphatase 2 (284 aa).

The next 7 helical transmembrane spans lie at 6-26, 46-66, 94-114, 119-139, 183-203, 227-247, and 262-282; these read VIFI…EFIP, FAEM…VVLY, FGMN…LFYD, LFNL…LLVV, IMGG…SFFL, TLWI…IIVM, and FAVY…TNII.

It belongs to the UppP family.

The protein localises to the cell membrane. The enzyme catalyses di-trans,octa-cis-undecaprenyl diphosphate + H2O = di-trans,octa-cis-undecaprenyl phosphate + phosphate + H(+). Catalyzes the dephosphorylation of undecaprenyl diphosphate (UPP). Confers resistance to bacitracin. In Clostridioides difficile (strain 630) (Peptoclostridium difficile), this protein is Undecaprenyl-diphosphatase 2.